A 427-amino-acid chain; its full sequence is MVSSQKLEKPIEMGSSEPLPIVDSDKRRKKKRKTRATDSLPGKFEDVYQLTSELLGEGAYAKVQGAVNLQSGKEYAVKIIEKQAGHSRSRVFREVETLYQCQGNRNILELIEFFEDDTRFYLVFEKLQGGSILAHIQKRKHFNEREASRVVRDVATALDFLHTKGIAHRDLKPENILCESPEKVSPVKICDFDLGSGVKLNNSCTPITTPELTTPCGSAEYMAPEVVEVFRDEATFYDKRCDLWSLGVVLYIMLSGYPPFVGHCGADCGWDRGEVCRMCQNKLFESIQEGKYEFPDKDWAHISNEAKDLISKLLVRDAKQRLSAAQVLQHPWVQGQAPERGLPTPQVLQRNSSTMDLTLFAAEAIALNRQLSQHEENELAEEQEALAEGLCSMKLSPPSKSRLARRRALAQAGRSRDANPCLTPAGL.

Over residues 1–11 the composition is skewed to basic and acidic residues; sequence MVSSQKLEKPI. Residues 1–37 are disordered; it reads MVSSQKLEKPIEMGSSEPLPIVDSDKRRKKKRKTRAT. The residue at position 34 (threonine 34) is a Phosphothreonine; by PAK2. Phosphoserine; by PAK2 is present on serine 39. A Protein kinase domain is found at 49–333; that stretch reads QLTSELLGEG…AAQVLQHPWV (285 aa). ATP-binding positions include 55 to 63 and lysine 78; that span reads LGEGAYAKV. Aspartate 170 acts as the Proton acceptor in catalysis. A phosphoserine mark is found at serine 180 and serine 185. Residues threonine 209, threonine 214, and threonine 344 each carry the phosphothreonine modification. A disordered region spans residues 407–427; sequence RALAQAGRSRDANPCLTPAGL.

It belongs to the protein kinase superfamily. CAMK Ser/Thr protein kinase family. In terms of assembly, interacts with the C-terminal regions of EIF4G1 and EIF4G2. Also binds to dephosphorylated ERK1 and ERK2, and to the p38 kinases. The cofactor is Mg(2+). Dual phosphorylation of Thr-209 and Thr-214 activates the kinase. Phosphorylation of Thr-344 activates the kinase. MAPK3/ERK1 is one of the kinases which activate MKNK1/MNK1. Phosphorylation by PAK2 leads to a reduced phosphorylation of EIF4G1. In terms of tissue distribution, ubiquitously expressed in all tissues examined, with high levels in skeletal muscle.

It catalyses the reaction L-seryl-[protein] + ATP = O-phospho-L-seryl-[protein] + ADP + H(+). The catalysed reaction is L-threonyl-[protein] + ATP = O-phospho-L-threonyl-[protein] + ADP + H(+). With respect to regulation, phosphorylated and activated by the p38 kinases and kinases in the Erk pathway. Functionally, may play a role in the response to environmental stress and cytokines. Appears to regulate translation by phosphorylating EIF4E, thus increasing the affinity of this protein for the 7-methylguanosine-containing mRNA cap. In Mus musculus (Mouse), this protein is MAP kinase-interacting serine/threonine-protein kinase 1 (Mknk1).